The sequence spans 157 residues: 2-C-methyl-D-erythritol 2,4-cyclodiphosphate synthase (157 aa).

Positions 8 and 10 each coordinate a divalent metal cation. 4-CDP-2-C-methyl-D-erythritol 2-phosphate-binding positions include 8–10 and 34–35; these read DVH and HS. His-42 is an a divalent metal cation binding site. Residues 56–58, 61–65, 100–106, 132–135, Phe-139, and Arg-142 each bind 4-CDP-2-C-methyl-D-erythritol 2-phosphate; these read DIG, FPDTD, AQAPKMA, and TTTE.

Belongs to the IspF family. As to quaternary structure, homotrimer. A divalent metal cation is required as a cofactor.

It catalyses the reaction 4-CDP-2-C-methyl-D-erythritol 2-phosphate = 2-C-methyl-D-erythritol 2,4-cyclic diphosphate + CMP. It functions in the pathway isoprenoid biosynthesis; isopentenyl diphosphate biosynthesis via DXP pathway; isopentenyl diphosphate from 1-deoxy-D-xylulose 5-phosphate: step 4/6. Functionally, involved in the biosynthesis of isopentenyl diphosphate (IPP) and dimethylallyl diphosphate (DMAPP), two major building blocks of isoprenoid compounds. Catalyzes the conversion of 4-diphosphocytidyl-2-C-methyl-D-erythritol 2-phosphate (CDP-ME2P) to 2-C-methyl-D-erythritol 2,4-cyclodiphosphate (ME-CPP) with a corresponding release of cytidine 5-monophosphate (CMP). This is 2-C-methyl-D-erythritol 2,4-cyclodiphosphate synthase from Pseudomonas syringae pv. syringae (strain B728a).